A 287-amino-acid polypeptide reads, in one-letter code: Rhodopsin (287 aa).

The Extracellular portion of the chain corresponds to 1 to 5 (VNGAA). A helical membrane pass occupies residues 6–30 (YAGLCAYMFLLILVGFPVNFLTLYV). Over 31–42 (TLEHKKLRTPLN) the chain is Cytoplasmic. A helical transmembrane segment spans residues 43 to 65 (YILLNLAVADLFMVLGGFTTTMY). Over 66–79 (TSAHGYFVLGRLGC) the chain is Extracellular. A disulfide bridge connects residues Cys-79 and Cys-156. Residues 80-102 (NVEGFFATLGGEIALWSLVVLAV) traverse the membrane as a helical segment. The 'Ionic lock' involved in activated form stabilization signature appears at 103 to 105 (ERW). Residues 103-121 (ERWIVVCKPISNFRFTEEH) are Cytoplasmic-facing. A helical transmembrane segment spans residues 122–142 (AIMGLGFNWVMASACAVPPLV). The Extracellular portion of the chain corresponds to 143–171 (GWSRYIPEGMQCSCGINYYTRSEGFNNES). Residue Asn-169 is glycosylated (N-linked (GlcNAc...) asparagine). A helical membrane pass occupies residues 172–193 (LVMKMLICHFLIPLFVIFFCYG). Topologically, residues 194–221 (RMLCAVKEAAAAQQESETTQRAEREVSR) are cytoplasmic. Residues 222 to 243 (MVVIMVISFLVCWLPYASVAWY) traverse the membrane as a helical segment. Residues 244-255 (IFCNQGSEFGPV) are Extracellular-facing. A helical membrane pass occupies residues 256-277 (FMTLPAFFAKSASIYNPLIYIC). At Lys-265 the chain carries N6-(retinylidene)lysine. Residues 278 to 287 (MNKHSRHCMI) lie on the Cytoplasmic side of the membrane.

The protein belongs to the G-protein coupled receptor 1 family. Opsin subfamily. Post-translationally, phosphorylated on some or all of the serine and threonine residues present in the C-terminal region. In terms of processing, contains one covalently linked retinal chromophore.

The protein resides in the membrane. It localises to the cell projection. The protein localises to the cilium. Its subcellular location is the photoreceptor outer segment. Functionally, photoreceptor required for image-forming vision at low light intensity. While most salt water fish species use retinal as chromophore, most freshwater fish use 3-dehydroretinal, or a mixture of retinal and 3-dehydroretinal. Light-induced isomerization of 11-cis to all-trans retinal triggers a conformational change that activates signaling via G-proteins. Subsequent receptor phosphorylation mediates displacement of the bound G-protein alpha subunit by arrestin and terminates signaling. This is Rhodopsin (rho) from Taurulus bubalis (Long-spined sea scorpion).